The primary structure comprises 342 residues: MGNLFSRNKSPATELERVALSIDDLKKRLQTISSSNTNTLYYYYMSIVVILSIAMAHTWLRFEDPQKTYVACALMLGAIGIVLAGRYVINGFFSWRTNRTTQKLENAISQKTTLLDLVKETLKFKEAKEILDRYEKIEQNTTIDKNDSTLKSPSPIKKLTADSSMFATPKQEQKRVETPTAQGPNSAMNSMNMTPYHQRNRNAVPIRPFLRQTTAFDRVLDYFMSDGPNCRNALICSICHTHNGMSTPAEYPYISFRCFECGHLNPAKKMGPQIPLTRPPMGPKGIQHNGRVGPSENTHNMMENQKPSTDLTPSASQNGSEKGSDSENEKVPESKTMETEFH.

Residues 1-39 are Cytoplasmic-facing; that stretch reads MGNLFSRNKSPATELERVALSIDDLKKRLQTISSSNTNT. Residues 13–34 are a coiled coil; that stretch reads TELERVALSIDDLKKRLQTISS. The chain crosses the membrane as a helical span at residues 40-60; it reads LYYYYMSIVVILSIAMAHTWL. The Lumenal portion of the chain corresponds to 61-68; that stretch reads RFEDPQKT. Residues 69–89 traverse the membrane as a helical segment; it reads YVACALMLGAIGIVLAGRYVI. Over 90 to 342 the chain is Cytoplasmic; the sequence is NGFFSWRTNR…ESKTMETEFH (253 aa). Residues 102–136 adopt a coiled-coil conformation; the sequence is QKLENAISQKTTLLDLVKETLKFKEAKEILDRYEK. The tract at residues 161–191 is disordered; it reads ADSSMFATPKQEQKRVETPTAQGPNSAMNSM. Positions 179 to 191 are enriched in polar residues; it reads PTAQGPNSAMNSM. A C4-type; plays a role in ER morphology zinc finger spans residues 236–261; it reads CSICHTHNGMSTPAEYPYISFRCFEC. Residues 278 to 342 form a disordered region; sequence RPPMGPKGIQ…ESKTMETEFH (65 aa). Residues 295–321 show a composition bias toward polar residues; sequence SENTHNMMENQKPSTDLTPSASQNGSE. The span at 322–342 shows a compositional bias: basic and acidic residues; sequence KGSDSENEKVPESKTMETEFH.

It belongs to the lunapark family. As to expression, expressed in cell bodies along the ventral cord around the pharynx and the tail both in larvae and adults. Also expressed in muscles and hypodermal cells.

It is found in the endoplasmic reticulum membrane. Functionally, plays a role in tubular endoplasmic reticulum network formation and maintenance. May be involved in central nervous system development. Has a presynaptic role in neurotransmission. Likely to operate in synaptogenesis by regulating vesicular transport or localization. Required for correct localization of rab-3 and snb-1. The polypeptide is Endoplasmic reticulum junction formation protein lunapark-1 (lnp-1) (Caenorhabditis elegans).